Consider the following 516-residue polypeptide: Probable 2-isopropylmalate synthase (516 aa).

The region spanning 20–271 (VTVFDTTLRD…KTNIRTEYLV (252 aa)) is the Pyruvate carboxyltransferase domain.

Belongs to the alpha-IPM synthase/homocitrate synthase family.

It carries out the reaction 3-methyl-2-oxobutanoate + acetyl-CoA + H2O = (2S)-2-isopropylmalate + CoA + H(+). It participates in amino-acid biosynthesis; L-leucine biosynthesis; L-leucine from 3-methyl-2-oxobutanoate: step 1/4. Its function is as follows. Catalyzes the condensation of the acetyl group of acetyl-CoA with 3-methyl-2-oxobutanoate (2-oxoisovalerate) to form 3-carboxy-3-hydroxy-4-methylpentanoate (2-isopropylmalate). The polypeptide is Probable 2-isopropylmalate synthase (leuA) (Methanosarcina mazei (strain ATCC BAA-159 / DSM 3647 / Goe1 / Go1 / JCM 11833 / OCM 88) (Methanosarcina frisia)).